Reading from the N-terminus, the 576-residue chain is Proline--tRNA ligase (576 aa).

This sequence belongs to the class-II aminoacyl-tRNA synthetase family. ProS type 1 subfamily. In terms of assembly, homodimer.

It localises to the cytoplasm. It catalyses the reaction tRNA(Pro) + L-proline + ATP = L-prolyl-tRNA(Pro) + AMP + diphosphate. Functionally, catalyzes the attachment of proline to tRNA(Pro) in a two-step reaction: proline is first activated by ATP to form Pro-AMP and then transferred to the acceptor end of tRNA(Pro). As ProRS can inadvertently accommodate and process non-cognate amino acids such as alanine and cysteine, to avoid such errors it has two additional distinct editing activities against alanine. One activity is designated as 'pretransfer' editing and involves the tRNA(Pro)-independent hydrolysis of activated Ala-AMP. The other activity is designated 'posttransfer' editing and involves deacylation of mischarged Ala-tRNA(Pro). The misacylated Cys-tRNA(Pro) is not edited by ProRS. The protein is Proline--tRNA ligase of Dechloromonas aromatica (strain RCB).